A 199-amino-acid polypeptide reads, in one-letter code: Acireductone dioxygenase 3 (199 aa).

Fe(2+)-binding residues include histidine 99, histidine 101, glutamate 105, and histidine 144. Residues histidine 99, histidine 101, glutamate 105, and histidine 144 each coordinate Ni(2+).

It belongs to the acireductone dioxygenase (ARD) family. Fe(2+) serves as cofactor. The cofactor is Ni(2+).

Its subcellular location is the cytoplasm. It localises to the nucleus. The enzyme catalyses 1,2-dihydroxy-5-(methylsulfanyl)pent-1-en-3-one + O2 = 4-methylsulfanyl-2-oxobutanoate + formate + 2 H(+). It carries out the reaction 1,2-dihydroxy-5-(methylsulfanyl)pent-1-en-3-one + O2 = 3-(methylsulfanyl)propanoate + CO + formate + 2 H(+). It functions in the pathway amino-acid biosynthesis; L-methionine biosynthesis via salvage pathway; L-methionine from S-methyl-5-thio-alpha-D-ribose 1-phosphate: step 5/6. Functionally, catalyzes 2 different reactions between oxygen and the acireductone 1,2-dihydroxy-3-keto-5-methylthiopentene (DHK-MTPene) depending upon the metal bound in the active site. Fe-containing acireductone dioxygenase (Fe-ARD) produces formate and 2-keto-4-methylthiobutyrate (KMTB), the alpha-ketoacid precursor of methionine in the methionine recycle pathway. Ni-containing acireductone dioxygenase (Ni-ARD) produces methylthiopropionate, carbon monoxide and formate, and does not lie on the methionine recycle pathway. The sequence is that of Acireductone dioxygenase 3 (ARD3) from Arabidopsis thaliana (Mouse-ear cress).